Reading from the N-terminus, the 139-residue chain is Small integral membrane protein 34 (139 aa).

Residues 46 to 66 (GTSAAWYILTIIGIYAVIFVF) traverse the membrane as a helical segment.

It is found in the membrane. The chain is Small integral membrane protein 34 from Homo sapiens (Human).